Here is a 525-residue protein sequence, read N- to C-terminus: GMP synthase [glutamine-hydrolyzing] (525 aa).

The Glutamine amidotransferase type-1 domain maps to 9-207 (RILILDFGSQ…VRDICQCEAL (199 aa)). The Nucleophile role is filled by Cys-86. Active-site residues include His-181 and Glu-183. One can recognise a GMPS ATP-PPase domain in the interval 208-400 (WTPAKIIDDA…LGLPYDMLYR (193 aa)). 235–241 (SGGVDSS) contributes to the ATP binding site.

Homodimer.

It carries out the reaction XMP + L-glutamine + ATP + H2O = GMP + L-glutamate + AMP + diphosphate + 2 H(+). It participates in purine metabolism; GMP biosynthesis; GMP from XMP (L-Gln route): step 1/1. Catalyzes the synthesis of GMP from XMP. This chain is GMP synthase [glutamine-hydrolyzing], found in Shigella dysenteriae serotype 1 (strain Sd197).